The sequence spans 194 residues: Large ribosomal subunit protein uL18 (194 aa).

The protein belongs to the universal ribosomal protein uL18 family. In terms of assembly, part of the 50S ribosomal subunit. Contacts the 5S and 23S rRNAs.

Its function is as follows. This is one of the proteins that bind and probably mediate the attachment of the 5S RNA into the large ribosomal subunit, where it forms part of the central protuberance. In Methanococcus aeolicus (strain ATCC BAA-1280 / DSM 17508 / OCM 812 / Nankai-3), this protein is Large ribosomal subunit protein uL18.